The primary structure comprises 69 residues: DNA-directed RNA polymerase subunit omega (69 aa).

The protein belongs to the RNA polymerase subunit omega family. The RNAP catalytic core consists of 2 alpha, 1 beta, 1 beta' and 1 omega subunit. When a sigma factor is associated with the core the holoenzyme is formed, which can initiate transcription.

The catalysed reaction is RNA(n) + a ribonucleoside 5'-triphosphate = RNA(n+1) + diphosphate. Functionally, promotes RNA polymerase assembly. Latches the N- and C-terminal regions of the beta' subunit thereby facilitating its interaction with the beta and alpha subunits. The polypeptide is DNA-directed RNA polymerase subunit omega (Hahella chejuensis (strain KCTC 2396)).